A 285-amino-acid chain; its full sequence is Pantothenate synthetase (285 aa).

Residue 30–37 (MGYLHEGH) coordinates ATP. Residue His37 is the Proton donor of the active site. Gln61 is a (R)-pantoate binding site. Gln61 is a binding site for beta-alanine. Position 148–151 (148–151 (GKKD)) interacts with ATP. Gln154 is a (R)-pantoate binding site. ATP contacts are provided by residues Val177 and 185–188 (LSSR).

It belongs to the pantothenate synthetase family. As to quaternary structure, homodimer.

The protein resides in the cytoplasm. The catalysed reaction is (R)-pantoate + beta-alanine + ATP = (R)-pantothenate + AMP + diphosphate + H(+). It functions in the pathway cofactor biosynthesis; (R)-pantothenate biosynthesis; (R)-pantothenate from (R)-pantoate and beta-alanine: step 1/1. In terms of biological role, catalyzes the condensation of pantoate with beta-alanine in an ATP-dependent reaction via a pantoyl-adenylate intermediate. The protein is Pantothenate synthetase of Leptospira interrogans serogroup Icterohaemorrhagiae serovar Lai (strain 56601).